The chain runs to 135 residues: BolA-like protein 1 (135 aa).

A Phosphoserine modification is found at Ser-81. The disordered stretch occupies residues 114–135; the sequence is WKENPQLDTSPACLGGSKKSRN.

It belongs to the BolA/IbaG family. As to quaternary structure, interacts with GLRX5.

The protein localises to the mitochondrion. Its function is as follows. Acts as a mitochondrial iron-sulfur (Fe-S) cluster assembly factor that facilitates (Fe-S) cluster insertion into a subset of mitochondrial proteins. Probably acts together with the monothiol glutaredoxin GLRX5. May protect cells against oxidative stress. The sequence is that of BolA-like protein 1 (BOLA1) from Bos taurus (Bovine).